The primary structure comprises 300 residues: Neutral protease NprE (300 aa).

Aspartate 139 is a Ca(2+) binding site. Residue histidine 143 coordinates Zn(2+). The active site involves glutamate 144. 2 residues coordinate Zn(2+): histidine 147 and glutamate 167. Residues aspartate 178, aspartate 181, aspartate 183, and glutamate 186 each contribute to the Ca(2+) site. Histidine 228 (proton donor) is an active-site residue.

Belongs to the peptidase M4 family. Ca(2+) serves as cofactor. Zn(2+) is required as a cofactor.

Its subcellular location is the secreted. The enzyme catalyses Similar, but not identical, to that of thermolysin.. Its function is as follows. Extracellular zinc metalloprotease. This chain is Neutral protease NprE (nprE), found in Bacillus pumilus (Bacillus mesentericus).